The primary structure comprises 212 residues: Outer-membrane lipoprotein carrier protein (212 aa).

The N-terminal stretch at 1 to 25 is a signal peptide; it reads MRKRILVSACAALAVFAAHMPTALA.

It belongs to the LolA family. In terms of assembly, monomer.

The protein localises to the periplasm. In terms of biological role, participates in the translocation of lipoproteins from the inner membrane to the outer membrane. Only forms a complex with a lipoprotein if the residue after the N-terminal Cys is not an aspartate (The Asp acts as a targeting signal to indicate that the lipoprotein should stay in the inner membrane). The chain is Outer-membrane lipoprotein carrier protein from Cupriavidus pinatubonensis (strain JMP 134 / LMG 1197) (Cupriavidus necator (strain JMP 134)).